A 202-amino-acid chain; its full sequence is Protein-methionine-sulfoxide reductase heme-binding subunit MsrQ (202 aa).

5 consecutive transmembrane segments (helical) span residues 8 to 28 (IVWL…WLFW), 82 to 102 (LWCF…ELGI), 116 to 136 (PYLT…VTST), 149 to 169 (LLHN…LWSV), and 171 to 191 (IVSP…TWRY).

This sequence belongs to the MsrQ family. As to quaternary structure, heterodimer of a catalytic subunit (MsrP) and a heme-binding subunit (MsrQ). FMN serves as cofactor. It depends on heme b as a cofactor.

The protein localises to the cell inner membrane. Functionally, part of the MsrPQ system that repairs oxidized periplasmic proteins containing methionine sulfoxide residues (Met-O), using respiratory chain electrons. Thus protects these proteins from oxidative-stress damage caused by reactive species of oxygen and chlorine generated by the host defense mechanisms. MsrPQ is essential for the maintenance of envelope integrity under bleach stress, rescuing a wide series of structurally unrelated periplasmic proteins from methionine oxidation. MsrQ provides electrons for reduction to the reductase catalytic subunit MsrP, using the quinone pool of the respiratory chain. This is Protein-methionine-sulfoxide reductase heme-binding subunit MsrQ from Klebsiella pneumoniae subsp. pneumoniae (strain ATCC 700721 / MGH 78578).